Here is a 91-residue protein sequence, read N- to C-terminus: Small ribosomal subunit protein bS16 (91 aa).

The protein belongs to the bacterial ribosomal protein bS16 family.

This is Small ribosomal subunit protein bS16 from Exiguobacterium sp. (strain ATCC BAA-1283 / AT1b).